The following is a 675-amino-acid chain: MVSANGDLHLPISNEQCMPENNGSLGFEAPTPRQILRVTLNLKYLIDKVVPIVYDPNDIVCDHSEILSPKVVKLAYEACGGNPKDKANKRKYQSVIIFSLLKVCEWYSILATMEVHNAKLYETRNLASQQLCKLLIEREETRDLQFLFMQLLLRRYVINENDEDQEPLNALELATDMHCTTVIGSSGFQRCLKWIWRGWIVQNGLDPTTFIKDDSLAEVSLISHFNPVRLKAPVYQNYLQMIFSFLFLGLYTLVVNGKDSERVQSFDLLESIFYVFNTGFILDELTKLYYIGYAHLSFWNLFNDTTYLIITFAMGFRAMSVTPLNAKYSSEDWDKISYRVLSCAAPFVWSRLLLYLESQRFIGIMLVILKHMMKESIVFFFLLFLIMIGFTQGFLGLDSADGKRDITGPILGNLTITVLGLGSFDVFEEFAPPYAAILYYGYYFIVSVILLNILIALYSTAYQKVIDNADDEYMALMSQKTLRYIRAPDEDVYVSPLNLIEVFMTPIFRILPPKRAKDLSYTVMTIVYSPFLLLISVKETREARRIKYNRMKRLNDDANEYDTPWDLTDGYLDDDDGLFSDNRNSGMRATQLKNSRSLKLQRTAEQEDVHFKVPKKWYKNVKKCSPSFEQYDNDDTEDDAGEDKDEVKELTKKVENLTAVITDLLEKLDIKDKKE.

Topologically, residues 1–236 (MVSANGDLHL…PVRLKAPVYQ (236 aa)) are cytoplasmic. Residues 237 to 257 (NYLQMIFSFLFLGLYTLVVNG) traverse the membrane as a helical segment. The Vacuolar portion of the chain corresponds to 258–295 (KDSERVQSFDLLESIFYVFNTGFILDELTKLYYIGYAH). The helical transmembrane segment at 296-316 (LSFWNLFNDTTYLIITFAMGF) threads the bilayer. At 317-335 (RAMSVTPLNAKYSSEDWDK) the chain is on the cytoplasmic side. Residues 336–355 (ISYRVLSCAAPFVWSRLLLY) form a helical membrane-spanning segment. The Vacuolar segment spans residues 356 to 376 (LESQRFIGIMLVILKHMMKES). The helical transmembrane segment at 377–397 (IVFFFLLFLIMIGFTQGFLGL) threads the bilayer. The Cytoplasmic segment spans residues 398-405 (DSADGKRD). The helical transmembrane segment at 406–426 (ITGPILGNLTITVLGLGSFDV) threads the bilayer. Topologically, residues 427 to 436 (FEEFAPPYAA) are vacuolar. Residues 437 to 457 (ILYYGYYFIVSVILLNILIAL) traverse the membrane as a helical segment. Topologically, residues 458–675 (YSTAYQKVID…EKLDIKDKKE (218 aa)) are cytoplasmic. Thr-636 is subject to Phosphothreonine.

Belongs to the transient receptor (TC 1.A.4) family.

It is found in the vacuole membrane. In terms of biological role, required for release of calcium ions from the vacuole in response to hyperosmotic shock. In Saccharomyces cerevisiae (strain ATCC 204508 / S288c) (Baker's yeast), this protein is Calcium channel YVC1.